The following is a 567-amino-acid chain: TPR repeat-containing protein MJ1428 (567 aa).

13 TPR repeats span residues 14–47 (YEDWVTEANYYLDEGIYDKAVECYLKALEKKNTN), 48–81 (PIDWFNLAYALYHLEKYDSALEAINEALKISPSN), 83–115 (YFAYLKGLIHYKRGEIILAYKYLKKASEKIKNE), 116–148 (ELFEILGDISVKYGRYEEALKYYLKSYKMANSK), 150–183 (LNALFKAGKIYLLFGDIDKAYDAFNEILQQNPSH), 199–234 (INSYEDLNNGLTMIKNKDYIGALKIFNKVLQIDENS), 236–268 (ISYYYKSVIAEIFEEYKKALEYIDKSISIFNRS), 269–301 (LYYAKKGDILYKLGDEEGAIEAYNKAIKLNSQN), 303–335 (YAYFGLAILYYRKGELEKSSNFFDKVLETYLEE), 344–379 (LNLYSLIGKAETTGIPKYYHEAMKYVDNLINLENSS), 380–412 (RWWYVKGYIYYKLGNYKDAYESFMNALRVNPKD), 414–446 (STLKSLAIVLEKSGKIDEAITTYTKILKIVNSL), and 505–538 (AYIYLSFIESYISLDEISQMVNDIKSKLSLEMYR).

The chain is TPR repeat-containing protein MJ1428 from Methanocaldococcus jannaschii (strain ATCC 43067 / DSM 2661 / JAL-1 / JCM 10045 / NBRC 100440) (Methanococcus jannaschii).